Consider the following 272-residue polypeptide: Insulin-like growth factor-binding protein 1 (272 aa).

Residues 1 to 25 form the signal peptide; the sequence is MPEFLTVVSWPFLILLSFQIGVAAG. Residues 28 to 109 enclose the IGFBP N-terminal domain; it reads QPWHCAPCTA…TRGQGACVPE (82 aa). Cystine bridges form between Cys-32–Cys-59, Cys-35–Cys-61, Cys-43–Cys-62, Cys-50–Cys-65, Cys-73–Cys-86, and Cys-80–Cys-106. Phosphoserine is present on residues Ser-139, Ser-157, and Ser-169. Thr-170 carries the post-translational modification Phosphothreonine. Position 171 is a phosphotyrosine (Tyr-171). A Thyroglobulin type-1 domain is found at 186–264; it reads KEPCQRELYK…SLETRGDPNC (79 aa). 3 disulfides stabilise this stretch: Cys-189–Cys-219, Cys-230–Cys-241, and Cys-243–Cys-264. Ser-255 is modified (phosphoserine). The Cell attachment site signature appears at 259-261; it reads RGD.

Binds equally well IGF1 and IGF2. Interacts with integrin ITGA5:ITGB1. Interacts with VHL; this interaction inhibits HIF1A degradation.

Its subcellular location is the secreted. Its function is as follows. Multifunctional protein that plays a critical role in regulating the availability of IGFs such as IGF1 and IGF2 to their receptors and thereby regulates IGF-mediated cellular processes including cell migration, proliferation, differentiation or apoptosis in a cell-type specific manner. Also plays a positive role in cell migration by interacting with integrin ITGA5:ITGB1 through its RGD motif. Mechanistically, binding to integrins leads to activation of focal adhesion kinase/PTK2 and stimulation of the mitogen-activated protein kinase (MAPK) pathway. Regulates cardiomyocyte apoptosis by suppressing HIF-1alpha/HIF1A ubiquitination and subsequent degradation. This is Insulin-like growth factor-binding protein 1 (Igfbp1) from Mus musculus (Mouse).